Consider the following 160-residue polypeptide: uncharacterized protein (160 aa).

The protein resides in the mitochondrion. This is an uncharacterized protein from Arabidopsis thaliana (Mouse-ear cress).